The following is a 623-amino-acid chain: (-)-alpha-pinene synthase 1, chloroplastic (623 aa).

The transit peptide at 1-52 (MDLISVLPSASKSCVCLHKPLSSSTHKLKPFCKTIRILGMPRRWKFAGPSMS) directs the protein to the chloroplast. Asp374, Asp378, and Asp526 together coordinate Mg(2+). The short motif at 374-378 (DDMYD) is the DDXXD motif element.

It belongs to the terpene synthase family. Tpsd subfamily. Mg(2+) is required as a cofactor. Requires Mn(2+) as cofactor.

Its subcellular location is the plastid. It localises to the chloroplast. It carries out the reaction (2E)-geranyl diphosphate = (1S,5S)-alpha-pinene + diphosphate. The catalysed reaction is (2E)-geranyl diphosphate = (1S,5S)-beta-pinene + diphosphate. It catalyses the reaction (2E)-geranyl diphosphate = (-)-beta-phellandrene + diphosphate. The protein operates within terpene metabolism; oleoresin biosynthesis. It participates in secondary metabolite biosynthesis; terpenoid biosynthesis. Functionally, monoterpene synthase (TPS) involved in the biosynthesis of monoterpene natural products included in conifer oleoresin secretions and volatile emissions; these compounds contribute to biotic and abiotic stress defense against herbivores and pathogens. Catalyzes the conversion of (2E)-geranyl diphosphate (GPP) to (-)-alpha-pinene and (-)-beta-pinene, and, to a lower extent, to (-)-beta-phellandrene. The protein is (-)-alpha-pinene synthase 1, chloroplastic of Pinus banksiana (Jack pine).